Reading from the N-terminus, the 89-residue chain is Small ribosomal subunit protein uS15 (89 aa).

Belongs to the universal ribosomal protein uS15 family. Part of the 30S ribosomal subunit. Forms a bridge to the 50S subunit in the 70S ribosome, contacting the 23S rRNA.

In terms of biological role, one of the primary rRNA binding proteins, it binds directly to 16S rRNA where it helps nucleate assembly of the platform of the 30S subunit by binding and bridging several RNA helices of the 16S rRNA. Forms an intersubunit bridge (bridge B4) with the 23S rRNA of the 50S subunit in the ribosome. This is Small ribosomal subunit protein uS15 from Ectopseudomonas mendocina (strain ymp) (Pseudomonas mendocina).